The sequence spans 641 residues: Fibrinogen alpha-2 chain (641 aa).

The N-terminal stretch at 1–23 is a signal peptide; sequence MTLRGVSMVLTWCLLVSKAWSSG. Residues 107–226 are a coiled coil; it reads SVSDVSNQVV…IVHESFSVER (120 aa). A disordered region spans residues 228–327; it reads DARSLHPYSG…QKTEELSFKK (100 aa). The N-linked (GlcNAc...) asparagine glycan is linked to N271. Residues 279–289 are compositionally biased toward basic and acidic residues; the sequence is VDERSKVEKDV. The span at 293–317 shows a compositional bias: low complexity; it reads STSSVSSSSSSSSSSSSTSSTISST. In terms of domain architecture, Fibrinogen C-terminal spans 395-636; that stretch reads RTNLSEYIDC…RTAVRFRRVQ (242 aa). N-linked (GlcNAc...) asparagine glycosylation is present at N397. A disulfide bridge links C404 with C435. Residue N458 is glycosylated (N-linked (GlcNAc...) asparagine). The cysteines at positions 571 and 584 are disulfide-linked.

Heterohexamer; disulfide linked. Contains 2 sets of 3 non-identical chains (alpha, beta and gamma). The 2 heterotrimers are in head to head conformation with the N-termini in a small central domain. Post-translationally, conversion of fibrinogen to fibrin is triggered by thrombin, which cleaves fibrinopeptides A and B from alpha and beta chains, and thus exposes the N-terminal polymerization sites responsible for the formation of the soft clot. The soft clot is converted into the hard clot by factor XIIIA which catalyzes the epsilon-(gamma-glutamyl)lysine cross-linking between gamma chains (stronger) and between alpha chains (weaker) of different monomers. In terms of processing, forms F13A-mediated cross-links between a glutamine and the epsilon-amino group of a lysine residue, forming fibronectin-fibrinogen heteropolymers.

The protein localises to the secreted. Its function is as follows. Fibrinogen has a double function: yielding monomers that polymerize into fibrin and acting as a cofactor in platelet aggregation. In Petromyzon marinus (Sea lamprey), this protein is Fibrinogen alpha-2 chain.